The following is a 525-amino-acid chain: ALBINO3-like protein 2, chloroplastic (525 aa).

4 helical membrane passes run 99–119 (WMII…LLIL), 167–187 (LWFF…MASI), 217–237 (FGPV…QISF), and 262–282 (ILSV…LVYW). TPR repeat units lie at residues 346–379 (PEEL…DPGY), 380–413 (VRGL…LLDE), 425–458 (MLAS…REPG), and 467–500 (FEAL…NPAY).

The protein belongs to the OXA1/ALB3/YidC (TC 2.A.9.2) family.

The protein localises to the plastid. It localises to the chloroplast thylakoid membrane. Probably required for the insertion of integral membrane proteins into the chloroplast thylakoid membranes. This is ALBINO3-like protein 2, chloroplastic (ALB3L2) from Arabidopsis thaliana (Mouse-ear cress).